Here is a 147-residue protein sequence, read N- to C-terminus: Large ribosomal subunit protein uL15 (147 aa).

The segment covering 1–13 (MELHSLKAAEGSR) has biased composition (basic and acidic residues). Residues 1-57 (MELHSLKAAEGSRKVRNRVGRGTSSGNGKTSGRGQKGQKSRSGGGVRPGFEGGQTEL) are disordered. 2 stretches are compositionally biased toward gly residues: residues 23–35 (TSSG…GRGQ) and 42–52 (SGGGVRPGFEG).

The protein belongs to the universal ribosomal protein uL15 family. Part of the 50S ribosomal subunit.

Binds to the 23S rRNA. This is Large ribosomal subunit protein uL15 from Lactococcus lactis subsp. lactis (strain IL1403) (Streptococcus lactis).